A 221-amino-acid chain; its full sequence is Epididymal secretory glutathione peroxidase (221 aa).

The N-terminal stretch at 1–21 (MAIQLRVFYLVPLLLASYVQT) is a signal peptide. Cys-73 is an active-site residue.

It belongs to the glutathione peroxidase family. As to expression, epididymis.

The protein resides in the secreted. It catalyses the reaction 2 glutathione + H2O2 = glutathione disulfide + 2 H2O. Protects cells and enzymes from oxidative damage, by catalyzing the reduction of hydrogen peroxide, lipid peroxides and organic hydroperoxide, by glutathione. May constitute a glutathione peroxidase-like protective system against peroxide damage in sperm membrane lipids. The chain is Epididymal secretory glutathione peroxidase (Gpx5) from Rattus norvegicus (Rat).